Consider the following 166-residue polypeptide: Small ribosomal subunit protein uS5 (166 aa).

The S5 DRBM domain occupies 11-74; it reads LQEKLIAVNR…EQAKRNLSKV (64 aa).

Belongs to the universal ribosomal protein uS5 family. In terms of assembly, part of the 30S ribosomal subunit. Contacts proteins S4 and S8.

With S4 and S12 plays an important role in translational accuracy. Functionally, located at the back of the 30S subunit body where it stabilizes the conformation of the head with respect to the body. This chain is Small ribosomal subunit protein uS5, found in Aeromonas salmonicida (strain A449).